The primary structure comprises 746 residues: EF-hand domain-containing family member C2 (746 aa).

3 consecutive DM10 domains span residues 75-182 (DKQV…RKMG), 226-367 (DGHV…RTKY), and 429-536 (ESNT…EKHA). The EF-hand domain occupies 557–592 (PRSREIRQVFAAADPQHTKVIEYDPFRNLIVSITDG).

The protein resides in the cytoplasm. Its subcellular location is the cytoskeleton. It is found in the cilium axoneme. Its function is as follows. Microtubule inner protein (MIP) part of the dynein-decorated doublet microtubules (DMTs) in cilia axoneme, which is required for motile cilia beating. This Gallus gallus (Chicken) protein is EF-hand domain-containing family member C2 (EFHC2).